Reading from the N-terminus, the 447-residue chain is Tol-Pal system protein TolB (447 aa).

Positions 1–34 (MSSRLPALPLSRRQALLGGAGSAAALLLPGGAQA) are cleaved as a signal peptide. The interval 426–447 (RNEQKVPTPGFASDPAWSPLLS) is disordered.

It belongs to the TolB family. The Tol-Pal system is composed of five core proteins: the inner membrane proteins TolA, TolQ and TolR, the periplasmic protein TolB and the outer membrane protein Pal. They form a network linking the inner and outer membranes and the peptidoglycan layer.

The protein localises to the periplasm. Functionally, part of the Tol-Pal system, which plays a role in outer membrane invagination during cell division and is important for maintaining outer membrane integrity. This Rhodopseudomonas palustris (strain BisB18) protein is Tol-Pal system protein TolB.